The following is a 320-amino-acid chain: Aspartate carbamoyltransferase catalytic subunit (320 aa).

Carbamoyl phosphate is bound by residues Arg-68 and Thr-69. Lys-96 provides a ligand contact to L-aspartate. Carbamoyl phosphate contacts are provided by Arg-118, His-148, and Gln-151. L-aspartate-binding residues include Arg-181 and Arg-236. Carbamoyl phosphate-binding residues include Gly-277 and Pro-278.

Belongs to the aspartate/ornithine carbamoyltransferase superfamily. ATCase family. Heterododecamer (2C3:3R2) of six catalytic PyrB chains organized as two trimers (C3), and six regulatory PyrI chains organized as three dimers (R2).

It catalyses the reaction carbamoyl phosphate + L-aspartate = N-carbamoyl-L-aspartate + phosphate + H(+). Its pathway is pyrimidine metabolism; UMP biosynthesis via de novo pathway; (S)-dihydroorotate from bicarbonate: step 2/3. In terms of biological role, catalyzes the condensation of carbamoyl phosphate and aspartate to form carbamoyl aspartate and inorganic phosphate, the committed step in the de novo pyrimidine nucleotide biosynthesis pathway. This chain is Aspartate carbamoyltransferase catalytic subunit, found in Methylibium petroleiphilum (strain ATCC BAA-1232 / LMG 22953 / PM1).